Consider the following 382-residue polypeptide: Phenylalanine dehydrogenase (382 aa).

Residue Arg-54 coordinates NAD(+). Lys-78 is a binding site for L-phenylalanine. Lys-90 (proton donor/acceptor) is an active-site residue. Residues Asp-125, Ser-156, Thr-160, 190–196 (GLGKVGY), 213–214 (DI), 253–254 (AF), and 274–276 (SAN) contribute to the NAD(+) site. Residue Asn-276 participates in L-phenylalanine binding.

Belongs to the Glu/Leu/Phe/Val dehydrogenases family.

It carries out the reaction L-phenylalanine + NAD(+) + H2O = 3-phenylpyruvate + NH4(+) + NADH + H(+). Activity is not affected by the metal chelating agent EDTA. Addition of 1 mM Mg(2+) results in 15% increase in activity, while the enzyme is strongly inhibited by 1 mM Fe(3+), Fe(2+), Cu(2+), Zn(2+) and Ag(+). In terms of biological role, catalyzes the reversible NAD(+)-dependent oxidative deamination of L-phenylalanine to phenylpyruvate. Can also catalyze the oxidative deamination of several other amino acids, with much lower efficiency. Shows activity towards various bulky aromatic alpha-keto acids/esters and (S)-amine alcohols. Can catalyze the amination of 3-(2-chlorophenyl)-2-oxopropionic acid (CPOA) to produce 2-chloro-L-phenylalanine (2-Cl-Phe), a chemical compound used in the pharmaceutical and biotechnology industries. Shows a preference for amination over deamination. The sequence is that of Phenylalanine dehydrogenase from Bacillus thermotolerans (Quasibacillus thermotolerans).